A 244-amino-acid chain; its full sequence is Carbonyl reductase [NADPH] 2 (244 aa).

11–39 (LVTGAGKGIGRDTVKALHVSGARVVAVTR) is a binding site for NADP(+). Substrate is bound at residue serine 136. Tyrosine 149 functions as the Proton acceptor in the catalytic mechanism. Serine 176 carries the post-translational modification Phosphoserine.

It belongs to the short-chain dehydrogenases/reductases (SDR) family. As to quaternary structure, homotetramer. In terms of tissue distribution, lung (ciliated cells, non-ciliated bronchiolar cells and type-II alveolar pneumocytes). Low expression in all extrapulmonary tissues, including adipose tissue.

The protein localises to the mitochondrion matrix. The catalysed reaction is a secondary alcohol + NADP(+) = a ketone + NADPH + H(+). Allosteric enzyme exhibiting negative cooperativity. Activated 2-5 fold by fatty acids. In terms of biological role, may function in the pulmonary metabolism of endogenous carbonyl compounds, such as aliphatic aldehydes and ketones derived from lipid peroxidation, 3-ketosteroids and fatty aldehydes, as well as in xenobiotic metabolism. The chain is Carbonyl reductase [NADPH] 2 (CBR2) from Sus scrofa (Pig).